The following is a 623-amino-acid chain: Phosphoglucomutase, chloroplastic (623 aa).

The N-terminal 63 residues, M1–G63, are a transit peptide targeting the chloroplast. The alpha-D-glucose 1,6-bisphosphate site is built by R88 and S181. Residue S181 is the Phosphoserine intermediate of the active site. 4 residues coordinate Mg(2+): S181, D346, D348, and D350. S181 carries the post-translational modification Phosphoserine. D350, R351, T414, E433, S435, and K446 together coordinate alpha-D-glucose 1,6-bisphosphate.

The protein belongs to the phosphohexose mutase family. As to quaternary structure, monomer. Mg(2+) is required as a cofactor. In terms of tissue distribution, expressed in flowers, siliques and germinating seeds.

The protein resides in the plastid. It localises to the chloroplast. It carries out the reaction alpha-D-glucose 1-phosphate = alpha-D-glucose 6-phosphate. The enzyme catalyses O-phospho-L-seryl-[protein] + alpha-D-glucose 1-phosphate = alpha-D-glucose 1,6-bisphosphate + L-seryl-[protein]. The catalysed reaction is alpha-D-glucose 1,6-bisphosphate + L-seryl-[protein] = O-phospho-L-seryl-[protein] + alpha-D-glucose 6-phosphate. Inhibited by the Calvin cycle intermediates fructose-1,6-bisphosphate and ribulose-1,5-bisphosphate. In terms of biological role, catalyzes the reversible isomerization of alpha-D-glucose 1-phosphate to alpha-D-glucose 6-phosphate. The mechanism proceeds via the intermediate compound alpha-D-glucose 1,6-bisphosphate. This enzyme participates in both the breakdown and synthesis of glucose. Factor that affects seed oil content. Accumulated starch in young embryos may play an important role in providing carbon resources for seed storage lipid biosynthesis in oilseed plants. Promotes gravitropic responses, negative in shoots but positive in roots, by facilitating starch granules (statoliths) formation in hypocotyls and roots columella. The polypeptide is Phosphoglucomutase, chloroplastic (Arabidopsis thaliana (Mouse-ear cress)).